The following is a 157-amino-acid chain: Transcription initiation factor IIA large subunit (157 aa).

The protein belongs to the TFIIA subunit 1 family. As to quaternary structure, TFIIA is a heterodimer of the large subunit and the small subunit gamma.

Its subcellular location is the nucleus. TFIIA is a component of the transcription machinery of RNA polymerase II and plays an important role in transcriptional activation. The polypeptide is Transcription initiation factor IIA large subunit (TOA1) (Encephalitozoon cuniculi (strain GB-M1) (Microsporidian parasite)).